The primary structure comprises 443 residues: ATP-dependent protease ATPase subunit HslU (443 aa).

ATP-binding positions include isoleucine 18, 60 to 65 (GVGKTE), aspartate 256, glutamate 321, and arginine 393.

Belongs to the ClpX chaperone family. HslU subfamily. In terms of assembly, a double ring-shaped homohexamer of HslV is capped on each side by a ring-shaped HslU homohexamer. The assembly of the HslU/HslV complex is dependent on binding of ATP.

Its subcellular location is the cytoplasm. ATPase subunit of a proteasome-like degradation complex; this subunit has chaperone activity. The binding of ATP and its subsequent hydrolysis by HslU are essential for unfolding of protein substrates subsequently hydrolyzed by HslV. HslU recognizes the N-terminal part of its protein substrates and unfolds these before they are guided to HslV for hydrolysis. The chain is ATP-dependent protease ATPase subunit HslU from Shigella dysenteriae serotype 1 (strain Sd197).